Here is an 82-residue protein sequence, read N- to C-terminus: Small ribosomal subunit protein bS16 (82 aa).

Belongs to the bacterial ribosomal protein bS16 family.

This is Small ribosomal subunit protein bS16 from Vibrio cholerae serotype O1 (strain ATCC 39541 / Classical Ogawa 395 / O395).